The sequence spans 80 residues: Large ribosomal subunit protein eL38 (80 aa).

The protein belongs to the eukaryotic ribosomal protein eL38 family. Component of the large ribosomal subunit (LSU). Mature N.crassa ribosomes consist of a small (40S) and a large (60S) subunit. The 40S small subunit contains 1 molecule of ribosomal RNA (18S rRNA) and at least 32 different proteins. The large 60S subunit contains 3 rRNA molecules (26S, 5.8S and 5S rRNA) and at least 42 different proteins.

Its subcellular location is the cytoplasm. Functionally, component of the ribosome, a large ribonucleoprotein complex responsible for the synthesis of proteins in the cell. The small ribosomal subunit (SSU) binds messenger RNAs (mRNAs) and translates the encoded message by selecting cognate aminoacyl-transfer RNA (tRNA) molecules. The large subunit (LSU) contains the ribosomal catalytic site termed the peptidyl transferase center (PTC), which catalyzes the formation of peptide bonds, thereby polymerizing the amino acids delivered by tRNAs into a polypeptide chain. The nascent polypeptides leave the ribosome through a tunnel in the LSU and interact with protein factors that function in enzymatic processing, targeting, and the membrane insertion of nascent chains at the exit of the ribosomal tunnel. The chain is Large ribosomal subunit protein eL38 (rpl-38) from Neurospora crassa (strain ATCC 24698 / 74-OR23-1A / CBS 708.71 / DSM 1257 / FGSC 987).